Here is a 386-residue protein sequence, read N- to C-terminus: Acetate kinase (386 aa).

N7 contacts Mg(2+). K14 is a binding site for ATP. R78 is a binding site for substrate. D135 (proton donor/acceptor) is an active-site residue. ATP contacts are provided by residues H195–G199, D268–R270, and G316–N320. Residue E370 coordinates Mg(2+).

Belongs to the acetokinase family. In terms of assembly, homodimer. It depends on Mg(2+) as a cofactor. Requires Mn(2+) as cofactor.

Its subcellular location is the cytoplasm. The enzyme catalyses acetate + ATP = acetyl phosphate + ADP. It functions in the pathway metabolic intermediate biosynthesis; acetyl-CoA biosynthesis; acetyl-CoA from acetate: step 1/2. Its function is as follows. Catalyzes the formation of acetyl phosphate from acetate and ATP. Can also catalyze the reverse reaction. This chain is Acetate kinase, found in Pseudarthrobacter chlorophenolicus (strain ATCC 700700 / DSM 12829 / CIP 107037 / JCM 12360 / KCTC 9906 / NCIMB 13794 / A6) (Arthrobacter chlorophenolicus).